Consider the following 445-residue polypeptide: Phosphoglucosamine mutase (445 aa).

Catalysis depends on Ser-102, which acts as the Phosphoserine intermediate. Ser-102, Asp-241, Asp-243, and Asp-245 together coordinate Mg(2+). The residue at position 102 (Ser-102) is a Phosphoserine.

It belongs to the phosphohexose mutase family. Mg(2+) is required as a cofactor. In terms of processing, activated by phosphorylation.

The enzyme catalyses alpha-D-glucosamine 1-phosphate = D-glucosamine 6-phosphate. Functionally, catalyzes the conversion of glucosamine-6-phosphate to glucosamine-1-phosphate. This Haemophilus influenzae (strain ATCC 51907 / DSM 11121 / KW20 / Rd) protein is Phosphoglucosamine mutase.